Here is a 106-residue protein sequence, read N- to C-terminus: Protein aveugle (106 aa).

In terms of domain architecture, SAM spans 26–91 (WTVSDVLKWY…WREIVKQRLK (66 aa)).

In terms of assembly, interacts with the SAM domain of cnk.

The protein resides in the cytoplasm. The protein localises to the membrane. Its function is as follows. Required for normal photoreceptor differentiation between Ras and Raf for EGFR signaling in the eye and for mitogen-activated protein kinase phosphorylation. Probably acts together with Cnk to promote Raf activation, perhaps by recruiting an activating kinase. This Drosophila melanogaster (Fruit fly) protein is Protein aveugle (ave).